The chain runs to 181 residues: MAISLGRVVVPSCTISGDRLFIPNFSAICSVSCGRINVGTGVISARRRRDIGGVLISSCLSTDSSSSPPSSSSGPKTKLYVSGLSFRTTEDTLRDTFEQFGNLIHMNMVMDKVANRPKGFAFLRYETEEEAMKAIQGMHGKFLDGRVIFVEEAKTRSDMSRAKPRRDFPKPQSKPRTFRTW.

Residues 1–44 (MAISLGRVVVPSCTISGDRLFIPNFSAICSVSCGRINVGTGVIS) constitute a chloroplast transit peptide. The RRM domain occupies 77-155 (TKLYVSGLSF…RVIFVEEAKT (79 aa)). Residues 155 to 169 (TRSDMSRAKPRRDFP) show a composition bias toward basic and acidic residues. Residues 155 to 181 (TRSDMSRAKPRRDFPKPQSKPRTFRTW) form a disordered region.

Interacts with MORF8/RIP1, MORF2/RIP2, MORF9/RIP9 and VAR3/OZ1.

The protein resides in the plastid. It localises to the chloroplast. In terms of biological role, involved in C-to-U editing of chloroplastic RNA. Required for the photosynthetic subunit psbF transcript editing in chloroplast. This Arabidopsis thaliana (Mouse-ear cress) protein is Organelle RRM domain-containing protein 6, chloroplastic.